Consider the following 248-residue polypeptide: Myelin protein P0 (248 aa).

Positions 1–29 are cleaved as a signal peptide; it reads MAPGAPSSSPSPILAALLFSSLVLSPTLA. Positions 30–143 constitute an Ig-like V-type domain; the sequence is IVVYTDREVY…DIVGKTSQVT (114 aa). Topologically, residues 30 to 153 are extracellular; that stretch reads IVVYTDREVY…LYVFEKVPTR (124 aa). Cysteine 50 and cysteine 127 are joined by a disulfide. Residue asparagine 122 is glycosylated (N-linked (GlcNAc...) (complex) asparagine). A helical membrane pass occupies residues 154-179; it reads YGVVLGAVIGGILGVVLLLLLLFYLI. Residues 180 to 248 lie on the Cytoplasmic side of the membrane; that stretch reads RYCWLRRQAA…GLGESRKDKK (69 aa). Residue serine 210 is modified to Phosphoserine; by PKC. The segment at 222–248 is disordered; the sequence is MLDHSRSTKAASEKKSKGLGESRKDKK. Basic and acidic residues predominate over residues 224–248; the sequence is DHSRSTKAASEKKSKGLGESRKDKK. 2 positions are modified to phosphoserine: serine 226 and serine 228. Serine 233 is modified (phosphoserine; by PKC). The residue at position 237 (serine 237) is a Phosphoserine. Serine 243 bears the Phosphoserine; by PKC mark.

It belongs to the myelin P0 protein family. As to quaternary structure, homodimer and homotetramer. In terms of processing, N-glycosylated; contains sulfate-substituted glycan. As to expression, found only in peripheral nervous system Schwann cells.

It localises to the cell membrane. Functionally, is an adhesion molecule necessary for normal myelination in the peripheral nervous system. It mediates adhesion between adjacent myelin wraps and ultimately drives myelin compaction. The polypeptide is Myelin protein P0 (Mpz) (Rattus norvegicus (Rat)).